Here is a 237-residue protein sequence, read N- to C-terminus: Alpha-S1-casein (237 aa).

An N-terminal signal peptide occupies residues 1 to 15 (MKLLIFSCLVTLALA). The disordered stretch occupies residues 39-60 (EDPIPVSEASSSEESVHQLNRD). 3 positions are modified to phosphoserine: Ser-79, Ser-80, and Ser-81.

Belongs to the alpha-casein family. In terms of tissue distribution, mammary gland specific. Secreted in milk.

It localises to the secreted. In terms of biological role, important role in the capacity of milk to transport calcium phosphate. This is Alpha-S1-casein (CSN1S1) from Notamacropus eugenii (Tammar wallaby).